We begin with the raw amino-acid sequence, 348 residues long: Dihydroorotase (348 aa).

Zn(2+)-binding residues include His-17 and His-19. Substrate contacts are provided by residues 19 to 21 (HLR) and Asn-45. Residues Lys-103, His-140, and His-178 each contribute to the Zn(2+) site. Lys-103 carries the post-translational modification N6-carboxylysine. His-140 lines the substrate pocket. Leu-223 provides a ligand contact to substrate. Residue Asp-251 coordinates Zn(2+). Residue Asp-251 is part of the active site. Substrate contacts are provided by His-255 and Ala-267.

This sequence belongs to the metallo-dependent hydrolases superfamily. DHOase family. Class II DHOase subfamily. In terms of assembly, homodimer. It depends on Zn(2+) as a cofactor.

It carries out the reaction (S)-dihydroorotate + H2O = N-carbamoyl-L-aspartate + H(+). The protein operates within pyrimidine metabolism; UMP biosynthesis via de novo pathway; (S)-dihydroorotate from bicarbonate: step 3/3. Its function is as follows. Catalyzes the reversible cyclization of carbamoyl aspartate to dihydroorotate. In Klebsiella pneumoniae (strain 342), this protein is Dihydroorotase.